The following is a 944-amino-acid chain: MSANSVFQQLWDKAQCTFSTKLNELAPFSEREQQFFAFSPFATEHLRVNPHWLTEIRQTPPVSDEWQNYSSQLKQQLTHVDNEDDLMAILRQFRHQQLVRIAWSQFFQLCDTPCTLKQLSVLAETLISVAKDKLYQQCCQQWGTPCDREGKPQPLLILGMGKLGGLELNFSSDIDLIFAYPENGVTQGGRRELDNAQFFTRLGQKLIKVLDQHTMDGFVYRVDMRLRPFGESGPLVMSFAALEDYYQEQGRDWERYAMVKARVLGAEKKEYCQILRQMLRPFVYRRYIDFSVIQSLRNMKSMISREVRRRGMIDNIKLGAGGIREIEFITQVFQLIRGGREPELQSHSLLTVLNVIAKLELLSAQETSQLADSYLFLRRLENLLQSIADQQTQTLPDNLEDKARLAFAMGFDDWQMLYQQINQKMQAVSVIFTQLIGEDDENEDEEDVSEFKRLWLLGRLPDSATLFHQGLTAEDRQAICQTLQLFRQDISKRTIGPRGRDVLDALMPKLLAKVCLQPQALVILQRITPLLLGIVSRTTYLELMQESDEVLTHVVRLCAASPMIAEQLTRHPLLLDELLDPHSLYQPLPLNAYQDELRQYLLRVPEEDEEQRLEALRQFKQAQLLRIAAEDIAGVLPVMKVSDHLTYLAEAIIHAVVHQAWSYMVKRYGEPAHLAQRDGLGFAVVGYGKLGGWELGYSSDLDLVFLLDCPMNILTTGAKQIDARQFYLRLAQRIIHLFSTRTSSGVLYEVDARLRPSGESGMLVSTIQAFDEYQKNEAWTWEHQALIRARMIYGDDQLQQMFARTRHETLCLARNATVLQQEVREMRQKMVQHLAPTQSNTFDLKASSGGITDIEFIAQYLVLRFSHQYPALTRWSDNVRILELMAKYQVMSEQEAQLLTQAYVTLRNELHHLALQTLPAVVDGDCFITERQWVLSSKQKWLDE.

Residues 1–440 (MSANSVFQQL…IFTQLIGEDD (440 aa)) are adenylyl removase. The segment at 448–944 (VSEFKRLWLL…LSSKQKWLDE (497 aa)) is adenylyl transferase.

This sequence belongs to the GlnE family. Mg(2+) serves as cofactor.

It catalyses the reaction [glutamine synthetase]-O(4)-(5'-adenylyl)-L-tyrosine + phosphate = [glutamine synthetase]-L-tyrosine + ADP. The catalysed reaction is [glutamine synthetase]-L-tyrosine + ATP = [glutamine synthetase]-O(4)-(5'-adenylyl)-L-tyrosine + diphosphate. Involved in the regulation of glutamine synthetase GlnA, a key enzyme in the process to assimilate ammonia. When cellular nitrogen levels are high, the C-terminal adenylyl transferase (AT) inactivates GlnA by covalent transfer of an adenylyl group from ATP to specific tyrosine residue of GlnA, thus reducing its activity. Conversely, when nitrogen levels are low, the N-terminal adenylyl removase (AR) activates GlnA by removing the adenylyl group by phosphorolysis, increasing its activity. The regulatory region of GlnE binds the signal transduction protein PII (GlnB) which indicates the nitrogen status of the cell. In Proteus mirabilis (strain HI4320), this protein is Bifunctional glutamine synthetase adenylyltransferase/adenylyl-removing enzyme.